A 242-amino-acid polypeptide reads, in one-letter code: Prosalusin (242 aa).

The N-terminal stretch at Met1–Ala26 is a signal peptide. Residues Ser27–Tyr189 constitute a propeptide that is removed on maturation. Gly93 to Ser100 is a binding site for ATP. A glycan (N-linked (GlcNAc...) asparagine) is linked at Asn149.

The protein belongs to the ClpA/ClpB family. Torsin subfamily.

Its subcellular location is the secreted. In terms of biological role, salusin may be a endocrine and/or paracrine factor able to increase intracellular calcium concentrations and induce cell mitogenesis. Salusin may also be a potent hypotensive peptide. In Bos taurus (Bovine), this protein is Prosalusin (TOR2A).